We begin with the raw amino-acid sequence, 326 residues long: 4-hydroxythreonine-4-phosphate dehydrogenase (326 aa).

Residue T132 participates in substrate binding. A divalent metal cation is bound by residues H160, H205, and H260. Substrate contacts are provided by K268, N277, and R286.

The protein belongs to the PdxA family. As to quaternary structure, homodimer. Zn(2+) serves as cofactor. The cofactor is Mg(2+). It depends on Co(2+) as a cofactor.

It is found in the cytoplasm. It catalyses the reaction 4-(phosphooxy)-L-threonine + NAD(+) = 3-amino-2-oxopropyl phosphate + CO2 + NADH. Its pathway is cofactor biosynthesis; pyridoxine 5'-phosphate biosynthesis; pyridoxine 5'-phosphate from D-erythrose 4-phosphate: step 4/5. Catalyzes the NAD(P)-dependent oxidation of 4-(phosphooxy)-L-threonine (HTP) into 2-amino-3-oxo-4-(phosphooxy)butyric acid which spontaneously decarboxylates to form 3-amino-2-oxopropyl phosphate (AHAP). The chain is 4-hydroxythreonine-4-phosphate dehydrogenase from Stenotrophomonas maltophilia (strain K279a).